A 230-amino-acid chain; its full sequence is Ureidoacrylate amidohydrolase RutB (230 aa).

Residue Asp24 is the Proton acceptor of the active site. Lys133 is a catalytic residue. Cys166 acts as the Nucleophile in catalysis.

This sequence belongs to the isochorismatase family. RutB subfamily.

The catalysed reaction is (Z)-3-ureidoacrylate + H2O + H(+) = (Z)-3-aminoacrylate + NH4(+) + CO2. It catalyses the reaction (Z)-3-ureidoacrylate + H2O = (Z)-3-aminoacrylate + carbamate + H(+). It carries out the reaction (Z)-2-methylureidoacrylate + H2O + H(+) = (Z)-2-methylaminoacrylate + NH4(+) + CO2. Hydrolyzes ureidoacrylate to form aminoacrylate and carbamate. The carbamate hydrolyzes spontaneously, thereby releasing one of the nitrogen atoms of the pyrimidine ring as ammonia and one of its carbon atoms as CO2. In Escherichia coli O7:K1 (strain IAI39 / ExPEC), this protein is Ureidoacrylate amidohydrolase RutB.